Here is a 186-residue protein sequence, read N- to C-terminus: Lipid A acyltransferase PagP (186 aa).

An N-terminal signal peptide occupies residues methionine 1–alanine 25. Catalysis depends on residues histidine 58, aspartate 101, and serine 102.

The protein belongs to the lipid A palmitoyltransferase family. Homodimer.

The protein resides in the cell outer membrane. The enzyme catalyses a lipid A + a 1,2-diacyl-sn-glycero-3-phosphocholine = a hepta-acyl lipid A + a 2-acyl-sn-glycero-3-phosphocholine. It carries out the reaction a lipid IVA + a 1,2-diacyl-sn-glycero-3-phosphocholine = a lipid IVB + a 2-acyl-sn-glycero-3-phosphocholine. It catalyses the reaction a lipid IIA + a 1,2-diacyl-sn-glycero-3-phosphocholine = a lipid IIB + a 2-acyl-sn-glycero-3-phosphocholine. Its function is as follows. Transfers a fatty acid residue from the sn-1 position of a phospholipid to the N-linked hydroxyfatty acid chain on the proximal unit of lipid A or its precursors. This Shigella flexneri serotype X (strain 2002017) protein is Lipid A acyltransferase PagP.